We begin with the raw amino-acid sequence, 466 residues long: Methylenetetrahydrofolate--tRNA-(uracil-5-)-methyltransferase TrmFO (466 aa).

An FAD-binding site is contributed by 14–19 (GGGLAG).

Belongs to the MnmG family. TrmFO subfamily. FAD is required as a cofactor.

The protein resides in the cytoplasm. It carries out the reaction uridine(54) in tRNA + (6R)-5,10-methylene-5,6,7,8-tetrahydrofolate + NADH + H(+) = 5-methyluridine(54) in tRNA + (6S)-5,6,7,8-tetrahydrofolate + NAD(+). The catalysed reaction is uridine(54) in tRNA + (6R)-5,10-methylene-5,6,7,8-tetrahydrofolate + NADPH + H(+) = 5-methyluridine(54) in tRNA + (6S)-5,6,7,8-tetrahydrofolate + NADP(+). In terms of biological role, catalyzes the folate-dependent formation of 5-methyl-uridine at position 54 (M-5-U54) in all tRNAs. This Brucella abortus (strain 2308) protein is Methylenetetrahydrofolate--tRNA-(uracil-5-)-methyltransferase TrmFO.